The primary structure comprises 288 residues: 6-phospho-5-dehydro-2-deoxy-D-gluconate aldolase (288 aa).

Residue Asp-85 is the Proton donor of the active site. The Zn(2+) site is built by His-86 and His-180. Gly-181 lines the dihydroxyacetone phosphate pocket. His-208 serves as a coordination point for Zn(2+). Dihydroxyacetone phosphate contacts are provided by residues 209-211 and 230-233; these read GGS and NVNT. Position 233 is a phosphothreonine (Thr-233).

This sequence belongs to the class II fructose-bisphosphate aldolase family. IolJ subfamily. Zn(2+) serves as cofactor.

The enzyme catalyses 6-phospho-5-dehydro-2-deoxy-D-gluconate = 3-oxopropanoate + dihydroxyacetone phosphate. It functions in the pathway polyol metabolism; myo-inositol degradation into acetyl-CoA; acetyl-CoA from myo-inositol: step 6/7. Its function is as follows. Produces dihydroxyacetone phosphate (DHAP or glycerone phosphate) and malonic semialdehyde (MSA or 3-oxopropanoate) from 6-phospho-5-dehydro-2-deoxy-D-gluconate (DKGP). The sequence is that of 6-phospho-5-dehydro-2-deoxy-D-gluconate aldolase (iolJ) from Halalkalibacterium halodurans (strain ATCC BAA-125 / DSM 18197 / FERM 7344 / JCM 9153 / C-125) (Bacillus halodurans).